Here is a 133-residue protein sequence, read N- to C-terminus: ATP synthase epsilon chain, chloroplastic (133 aa).

Belongs to the ATPase epsilon chain family. In terms of assembly, F-type ATPases have 2 components, CF(1) - the catalytic core - and CF(0) - the membrane proton channel. CF(1) has five subunits: alpha(3), beta(3), gamma(1), delta(1), epsilon(1). CF(0) has three main subunits: a, b and c.

The protein localises to the plastid. Its subcellular location is the chloroplast thylakoid membrane. Functionally, produces ATP from ADP in the presence of a proton gradient across the membrane. This chain is ATP synthase epsilon chain, chloroplastic, found in Gossypium barbadense (Sea Island cotton).